A 504-amino-acid polypeptide reads, in one-letter code: MAAALADMADLEELSRLSPLSPGSPGPAARGRAEPPEEEEEEDDEEAEAEAVAALLLNGGAGGGAGGGEAETMSEPSPESASQAGGDEDEDEEDDEDEGSSSGGAEEESSAESLVGSSSGGCSGDETRSLSPGAASSSSGDGDGKEGLEEPKGPRGGPGGPGSSGGGSSSSSVVSSGGDEGYGTGGGGSSATSGGRRGSLEMSSDGEPLSRMDSEDSISSTLMDIDSTISSGRSTPAMMNGQGSTTASSKHIAYNCCWDQCQACFNSSPDLADHIRSIHVDGQRGGVFVCLWKGCKVYNTPSTSQSWLQRHMLTHSGDKPFKCVVGGCNASFASQGGLARHVPTHFSQQNSSKVSSQPKAKEESPSKAGMNKRRKLKNKRRRSLPRPHDFFDAQTLDAIRHRAICFNLSAHIESLGKGHSVVFHSTVIAKRKEESGKIKLLLHWMPEDILPDVWVNESERHQLKTKVVHLSKLPKDTALLLDPNIYRTMPQKRLKRFDILNFPR.

The tract at residues Met1 to Ser219 is disordered. Ala2 is modified (N-acetylalanine). Residues Arg16 to Arg30 are compositionally biased toward low complexity. Ser18, Ser21, and Ser24 each carry phosphoserine. The segment covering Pro36–Ala49 has biased composition (acidic residues). Residues Gly59 to Glu69 are compositionally biased toward gly residues. The span at Gly86–Ser110 shows a compositional bias: acidic residues. A compositionally biased stretch (low complexity) spans Ser129 to Gly140. Ser131 carries the phosphoserine modification. Residues Gly142 to Gly153 are compositionally biased toward basic and acidic residues. Gly residues-rich tracts occupy residues Pro154–Ser168 and Gly178–Ser189. Phosphoserine occurs at positions 199, 203, and 204. The segment at Met202–Val287 is interaction with RBBP4. Residues Tyr254–His279 form a C2H2-type 1 zinc finger. The C2H2-type 2; degenerate zinc-finger motif lies at Lys293–His315. The C2H2-type 3 zinc-finger motif lies at Phe321–His345. Residues His345–Pro358 show a composition bias toward polar residues. The tract at residues His345–Pro387 is disordered. Positions Met370 to Pro385 are enriched in basic residues. At Ser383 the chain carries Phosphoserine. The segment at Arg400–Ser471 is interaction with SUZ12. The interval Thr488–Arg504 is important for nucleosome binding activity of the PRC2 complex.

Belongs to the AEBP2/jing C2H2-type zinc-finger family. Self-associates. Associates with the PRC2 complex, which consists of the core components EED, EZH1 or EZH2, SUZ12, and RBBP4, and various combinations of accessory subunits including AEBP2, JARID2, PHF19, MTF2 and EPOP. Found in a monomeric PRC2.2 (class 2) complex consisting of at least SUZ12, RBBP4, AEBP2 and JARID2. Within the PRC2 complex, interacts directly with SUZ12; competes with PHF19 for SUZ12 binding. Interacts with EED, EZH2, and RBBP4. May also interact with RBBP7. In terms of tissue distribution, expressed in brain, brown adipose tissue, white adipose tissue, heart, kidney, lung, skeletal muscle, small intestine and spleen. Expressed at low levels in liver.

It localises to the nucleus. Acts as an accessory subunit for the core Polycomb repressive complex 2 (PRC2), which mediates histone H3K27 (H3K27me3) trimethylation on chromatin leading to transcriptional repression of the affected target gene. Plays a role in nucleosome localization of the PRC2 complex. This Mus musculus (Mouse) protein is Zinc finger protein AEBP2 (Aebp2).